The following is a 440-amino-acid chain: Calcium/calmodulin-regulated receptor-like kinase 1 (440 aa).

The helical transmembrane segment at 8-28 threads the bilayer; it reads LIVGISLGLVIGVVLAISALF. A calmodulin binding region spans residues 28 to 228; that stretch reads FCFRYHRKKS…ARGLEYLHDG (201 aa). Positions 113 to 380 constitute a Protein kinase domain; that stretch reads CNFTTLIGQG…DIVQVLTRVI (268 aa). ATP-binding positions include 119–127 and Lys141; that span reads IGQGAFGPV. Tyr186 carries the post-translational modification Phosphotyrosine. Asp237 acts as the Proton acceptor in catalysis. A Phosphoserine modification is found at Ser241. Thr274 is modified (phosphothreonine). Tyr282 is subject to Phosphotyrosine. Residues 369–440 form a calmodulin binding region; sequence MRDIVQVLTR…DSSIAEDVIL (72 aa). The segment at 386–427 is disordered; it reads RKRQKNSPSPSPRLPPPPPIVEESEGELTANGSLRSEIHRRD. The span at 394 to 405 shows a compositional bias: pro residues; the sequence is SPSPRLPPPPPI.

It belongs to the protein kinase superfamily. Ser/Thr protein kinase family. As to quaternary structure, interacts with calmodulin (CaM) in a calcium- (Ca(2+)-) dependent manner. Binds to MEKK1. Similar transcript expression levels in seedlings, roots, leaves, stems and flowers, and lower levels in siliques, but protein accumulates mostly in 7-day-old seedlings, old roots and young leaves and, to a lower extent, in young roots, old leaves, flowers and siliques (at protein level).

The protein resides in the cell membrane. Its subcellular location is the endosome membrane. The catalysed reaction is L-seryl-[protein] + ATP = O-phospho-L-seryl-[protein] + ADP + H(+). It carries out the reaction L-threonyl-[protein] + ATP = O-phospho-L-threonyl-[protein] + ADP + H(+). Kinase activity is stimulated by calcium/calmodulin, but blocked by chlorpromazine. In terms of biological role, required for cold tolerance, via the activation of MAP kinases activity. Phosphorylates and activates MEKK1 in response to cold in a calcium-dependent manner. This is Calcium/calmodulin-regulated receptor-like kinase 1 from Arabidopsis thaliana (Mouse-ear cress).